The sequence spans 1170 residues: WD repeat-containing protein 35 (1170 aa).

5 WD repeats span residues 12–51 (PNNV…DDSK), 69–108 (GHSG…WYEE), 113–152 (RNKS…IWGK), 154–193 (LKGI…IMKM), and 491–528 (GTRD…LIQK).

As to quaternary structure, component of the IFT complex A (IFT-A) complex. IFT-A complex is divided into a core subcomplex composed of IFT122:IFT140:WDR19 which is associated with TULP3 and a peripheral subcomplex composed of IFT43:WDR35:TTC21B. Interacts directy with IFT122, ITF43 and TTC21B. Interacts with IFT43. Interacts with CFAP61. In terms of tissue distribution, expressed at high levels in testis and at lower levels in the brain (at protein level). Also present in other tissues, including heart, uterus, spinal cord, ovary, liver, kidney, lung, pancreas and stomach.

The protein localises to the cytoplasm. The protein resides in the cytoskeleton. Its subcellular location is the microtubule organizing center. It localises to the centrosome. It is found in the cilium axoneme. The protein localises to the cilium basal body. As a component of the IFT complex A (IFT-A), a complex required for retrograde ciliary transport and entry into cilia of G protein-coupled receptors (GPCRs), it is involved in ciliogenesis and ciliary protein trafficking. May promote CASP3 activation and TNF-stimulated apoptosis. This Rattus norvegicus (Rat) protein is WD repeat-containing protein 35 (Wdr35).